The primary structure comprises 401 residues: MTALSKSKEIIDQTSHYGANNYHPLPIVISEALGAWVKDPEGNEYMDMLSAYSAVNQGHRHPKIIQALKDQADKITLTSRAFHNDQLGPFYEKTAKLTGKEMILPMNTGAEAVESAVKAARRWAYEVKGVADNQAEIIACVGNFHGRTMLAVSLSSEEEYKRGFGPMLPGIKLIPYGDVEALRQAITPNTAAFLFEPIQGEAGIVIPPEGFLQEAAAICKEENVLFIADEIQTGLGRTGKTFACDWDGIVPDMYILGKALGGGVFPISCIAADREILGVFNPGSHGSTFGGNPLACAVSIASLEVLEDEKLADRSLELGEYFKSELESIDSPVIKEVRGRGLFIGVELTEAARPYCERLKEEGLLCKETHDTVIRFAPPLIISKEDLDWAIEKIKHVLRNA.

K258 is modified (N6-(pyridoxal phosphate)lysine).

The protein belongs to the class-III pyridoxal-phosphate-dependent aminotransferase family. OAT subfamily. Requires pyridoxal 5'-phosphate as cofactor.

Its subcellular location is the cytoplasm. It catalyses the reaction a 2-oxocarboxylate + L-ornithine = L-glutamate 5-semialdehyde + an L-alpha-amino acid. It functions in the pathway amino-acid biosynthesis; L-proline biosynthesis; L-glutamate 5-semialdehyde from L-ornithine: step 1/1. Functionally, catalyzes the interconversion of ornithine to glutamate semialdehyde. The polypeptide is Ornithine aminotransferase (Bacillus subtilis (strain 168)).